The chain runs to 161 residues: RNA pyrophosphohydrolase (161 aa).

Residues 12–154 form the Nudix hydrolase domain; sequence PYRPGVGMMI…KRKLYQAVVK (143 aa). The Nudix box signature appears at 46–67; sequence GGIVPGETPSIAAMREMLEEIG.

This sequence belongs to the Nudix hydrolase family. RppH subfamily. It depends on a divalent metal cation as a cofactor.

Functionally, accelerates the degradation of transcripts by removing pyrophosphate from the 5'-end of triphosphorylated RNA, leading to a more labile monophosphorylated state that can stimulate subsequent ribonuclease cleavage. The sequence is that of RNA pyrophosphohydrolase from Rickettsia rickettsii (strain Iowa).